The following is a 477-amino-acid chain: MSRWSTALQLTDIDDFITPSQICIKPVQIDKARSKTGAKIKIKGDSCFEESESGNLKLNKVDISLQDCLACSGCITSAEEVLITQQSQEELLKILQENSKNKASEDWDNVRTIVITLATQPLLSLAHRYQIGVEDAARHLNGYFRSLGADYVLSTKVADDIALLECRQEFVDRYRENENLTMLSSSCPGWVCYAEKTHGNFILPYVSTTRSPQQIMGVLVKQILADKINVPASRIYHVTVMPCYDKKLEASREDFFSKANNSRDVDCVITSVEVEQLLSEAQRPLSQYDLFDLDWPWSNVRPEFMVWAHEKTQSGGYAEHIFKFAAKHIFNEDLTTELEFKQLKNRDFREIILKQNGKTVLKFAIANGFRNIQNLVQKLKREKLSNYHFVEVMACPSGCINGGAQIRPTTGQHVRELTRKLEELYHNLPRSEPENSLTKHIYNDFLDGFQTDKSYEMLHTRYHDVVSDLSISLNINW.

Residues cysteine 23, cysteine 68, cysteine 71, cysteine 74, cysteine 187, cysteine 243, cysteine 395, and cysteine 399 each coordinate [4Fe-4S] cluster.

It belongs to the NARF family.

In terms of biological role, component of the cytosolic iron-sulfur (Fe/S) protein assembly machinery. Required for maturation of extramitochondrial Fe/S proteins. This is Probable cytosolic Fe-S cluster assembly factor GM20417 from Drosophila sechellia (Fruit fly).